The following is a 355-amino-acid chain: Peptide chain release factor 1 (355 aa).

Q231 carries the post-translational modification N5-methylglutamine.

The protein belongs to the prokaryotic/mitochondrial release factor family. Methylated by PrmC. Methylation increases the termination efficiency of RF1.

It is found in the cytoplasm. In terms of biological role, peptide chain release factor 1 directs the termination of translation in response to the peptide chain termination codons UAG and UAA. In Erythrobacter litoralis (strain HTCC2594), this protein is Peptide chain release factor 1.